Reading from the N-terminus, the 2179-residue chain is Genome polyprotein (2179 aa).

4 disordered regions span residues 503-531 (FSKD…PTGD), 623-678 (QPQK…YPIQ), 703-738 (RAKK…GDQF), and 753-847 (EPSV…PPKM). Polar residues-rich tracts occupy residues 630-642 (DTPS…QPFH) and 659-678 (TTFA…YPIQ). Residues 758-770 (SEDTSSQSYISTE) are compositionally biased toward polar residues. Over residues 783-806 (SEESTQLSQLSSSSNDSPENNENT) the composition is skewed to low complexity. The segment covering 819–831 (EISEVEDEVDGMT) has biased composition (acidic residues). Residues 1112 to 1125 (CFTCGKIGHFSRNC) form a CCHC-type zinc finger. Aspartate 1226 functions as the For protease activity; shared with dimeric partner in the catalytic mechanism. Residues 1409–1591 (QQFDLIEPSD…NKIQFLGMDF (183 aa)) enclose the Reverse transcriptase domain. The Mg(2+) site is built by aspartate 1479, aspartate 1542, and aspartate 1543. Disordered regions lie at residues 1822 to 1848 (QRRT…KLSH), 2114 to 2144 (NIVK…KNKC), and 2160 to 2179 (YSTK…EPCV). Residues 1827-1840 (SSSTKSKADSSQST) are compositionally biased toward low complexity. The segment covering 2120 to 2144 (PRKRKGKAKSRSSTRSEKRRAKNKC) has biased composition (basic residues). Over residues 2162-2179 (TKPSTPSWTQDSSSEPCV) the composition is skewed to polar residues.

This sequence belongs to the Petuviruses genome polyprotein family.

The catalysed reaction is DNA(n) + a 2'-deoxyribonucleoside 5'-triphosphate = DNA(n+1) + diphosphate. Its function is as follows. Encodes presumably for at least four polypeptides: Movement protein (MP), capsid protein (CP), Protease (PR), and reverse transcriptase (RT). The chain is Genome polyprotein from Petunia vein clearing virus (isolate Shepherd) (PVCV).